The following is a 943-amino-acid chain: Serine/threonine-protein kinase ATG1 (943 aa).

The 306-residue stretch at 22–327 (FVIDKEIGKG…FEDFFHHPVI (306 aa)) folds into the Protein kinase domain. Residues 28-36 (IGKGSFAQV) and K51 each bind ATP. D165 serves as the catalytic Proton acceptor. Disordered stretches follow at residues 334–468 (LVED…LTDE), 503–561 (QQGQ…SPGA), 774–800 (LPEE…GGQA), 858–888 (HLPK…SDDK), and 914–943 (AASK…SVPT). Residues 338 to 352 (DIPKPEKPVLAETKS) are compositionally biased toward basic and acidic residues. The span at 517-529 (ATQQGHPTSTTGA) shows a compositional bias: polar residues. A compositionally biased stretch (basic and acidic residues) spans 542–554 (RNDHYRKASHDKT). Low complexity predominate over residues 919 to 928 (QQQQQQQQVV).

It belongs to the protein kinase superfamily. Ser/Thr protein kinase family. APG1/unc-51/ULK1 subfamily. In terms of assembly, homodimer. Forms a ternary complex with ATG13 and ATG17.

It localises to the cytoplasm. Its subcellular location is the preautophagosomal structure membrane. It catalyses the reaction L-seryl-[protein] + ATP = O-phospho-L-seryl-[protein] + ADP + H(+). The catalysed reaction is L-threonyl-[protein] + ATP = O-phospho-L-threonyl-[protein] + ADP + H(+). Functionally, serine/threonine protein kinase involved in the cytoplasm to vacuole transport (Cvt) and found to be essential in autophagy, where it is required for the formation of autophagosomes. Involved in the clearance of protein aggregates which cannot be efficiently cleared by the proteasome. Required for selective autophagic degradation of the nucleus (nucleophagy) as well as for mitophagy which contributes to regulate mitochondrial quantity and quality by eliminating the mitochondria to a basal level to fulfill cellular energy requirements and preventing excess ROS production. Also involved in endoplasmic reticulum-specific autophagic process, in selective removal of ER-associated degradation (ERAD) substrates. Plays a key role in ATG9 and ATG23 cycling through the pre-autophagosomal structure and is necessary to promote ATG18 binding to ATG9 through phosphorylation of ATG9. Catalyzes phosphorylation of ATG4, decreasing the interaction between ATG4 and ATG8 and impairing deconjugation of PE-conjugated forms of ATG8. This is Serine/threonine-protein kinase ATG1 from Chaetomium globosum (strain ATCC 6205 / CBS 148.51 / DSM 1962 / NBRC 6347 / NRRL 1970) (Soil fungus).